The following is a 644-amino-acid chain: Heat shock protein SSC3, mitochondrial (644 aa).

Belongs to the heat shock protein 70 family.

It localises to the mitochondrion matrix. Its subcellular location is the mitochondrion nucleoid. Functionally, plays a role in facilitating the assembly of some protein complexes inside the mitochondria. It may initiate the events that lead to refolding of imported precursors in the matrix space. The sequence is that of Heat shock protein SSC3, mitochondrial (ECM10) from Saccharomyces cerevisiae (strain ATCC 204508 / S288c) (Baker's yeast).